Reading from the N-terminus, the 147-residue chain is Hemoglobin subunit gamma (147 aa).

Residues 3–147 enclose the Globin domain; sequence HFTAEEKAVI…VAIALAHKYH (145 aa). Residues histidine 64 and histidine 93 each coordinate heme b.

This sequence belongs to the globin family. As to quaternary structure, heterotetramer of two alpha chains and two gamma chains in fetal hemoglobin (Hb F). As to expression, red blood cells.

Gamma chains make up the fetal hemoglobin F, in combination with alpha chains. The protein is Hemoglobin subunit gamma (HBG) of Eulemur fulvus fulvus (Brown lemur).